We begin with the raw amino-acid sequence, 163 residues long: Probable ribosome biogenesis protein RLP24 (163 aa).

It belongs to the eukaryotic ribosomal protein eL24 family. Associated with nucleolar and cytoplasmic pre-60S particles. At the end of biogenesis it dissociates from cytoplasmic pre-60S particles and is likely to be exchanged for its ribosomal homolog, RPL24.

It is found in the nucleus. The protein localises to the nucleolus. Its function is as follows. Involved in the biogenesis of the 60S ribosomal subunit. Ensures the docking of GTPBP4/NOG1 to pre-60S particles. The protein is Probable ribosome biogenesis protein RLP24 (RSL24D1) of Bos taurus (Bovine).